Consider the following 856-residue polypeptide: Histone-lysine N-methyltransferase EZA1 (856 aa).

Residues 1–11 (MVTDDSNSSGR) show a composition bias toward polar residues. Disordered stretches follow at residues 1–34 (MVTD…GLEN), 66–87 (VSPF…NSNM), and 366–473 (NVDS…HHGS). The segment covering 17–28 (DDDDDGEEEEDR) has biased composition (acidic residues). Residues 22–49 (GEEEEDRLEGLENRLSELKRKIQGERVR) are a coiled coil. Residues 68–87 (PFSSAASSRATAEDNGNSNM) show a composition bias toward polar residues. Over residues 374-392 (EQEHGIRGKREVPILKDSN) the composition is skewed to basic and acidic residues. The span at 393 to 419 (DLPNLSNKKQKTAASDTKMSFVNSVPS) shows a compositional bias: polar residues. Residues 438–451 (KVNRDSEADAKEVG) are compositionally biased toward basic and acidic residues. Residues 489-539 (PSTEWNPIEKDLYLKGVEIFGRNSCLIARNLLSGLKTCLDVSNYMRENEVS) enclose the SANT domain. Residues 594 to 693 (WKRIAGGKNQ…SLGEAPRRGE (100 aa)) form the CXC domain. Positions 707–822 (QRILLGKSDV…ASEELFYDYR (116 aa)) constitute an SET domain. Tyrosine 821 is a binding site for S-adenosyl-L-methionine. Residues 827 to 856 (QAPVWARKPEGSKKDDSAITHRRARKHQSH) form a disordered region. The segment covering 833 to 845 (RKPEGSKKDDSAI) has biased composition (basic and acidic residues). The short motif at 838-845 (SKKDDSAI) is the Nuclear localization signal element. Basic residues predominate over residues 846–856 (THRRARKHQSH).

The protein belongs to the class V-like SAM-binding methyltransferase superfamily. Histone-lysine methyltransferase family. EZ subfamily. As to quaternary structure, component of the plant homeodomain / polycomb repressive complex 2 (PHD-PRC2) large complex during prolonged cold, composed of core PRC2 components (VRN2, EZA1, FIE and MSI1), and three related PHD finger proteins (VIL1, VIL2 and VIN3) that mediates histone H3 trimethylation on 'Lys-27' H3K27me3. Interacts with TAF13. Interacts with EOL1. Interacts (via SANT domain) with HXK1 in the nucleus.

It localises to the nucleus. The enzyme catalyses L-lysyl(27)-[histone H3] + 3 S-adenosyl-L-methionine = N(6),N(6),N(6)-trimethyl-L-lysyl(27)-[histone H3] + 3 S-adenosyl-L-homocysteine + 3 H(+). Polycomb group (PcG) protein. Catalytic subunit of some PcG multiprotein complex, which methylates 'Lys-27' of histone H3, leading to transcriptional repression of the affected target genes, mainly abscisic acid (ABA) responsive elements. PcG proteins act by forming multiprotein complexes, which are required to maintain the transcriptionally repressive state of homeotic genes throughout development. PcG proteins are not required to initiate repression, but to maintain it during later stages of development. Forms a nuclear complex with CLF and HXK1 to target common glucose-responsive genes and regulate glucose signaling by glucose-mediated gene repression. Affects the recruitment of HXK1 to the target chromatin. This is Histone-lysine N-methyltransferase EZA1 from Arabidopsis thaliana (Mouse-ear cress).